We begin with the raw amino-acid sequence, 350 residues long: DNA-directed RNA polymerase subunit alpha (350 aa).

Positions 1–226 (MLISQRPTLS…ELFGLARELN (226 aa)) are alpha N-terminal domain (alpha-NTD). Residues 241–350 (ADHIASFALP…NQDYAETEQL (110 aa)) are alpha C-terminal domain (alpha-CTD). Residues 328–350 (GTWTSDAGYDLDDNQDYAETEQL) form a disordered region. Residues 336 to 350 (YDLDDNQDYAETEQL) show a composition bias toward acidic residues.

It belongs to the RNA polymerase alpha chain family. As to quaternary structure, homodimer. The RNAP catalytic core consists of 2 alpha, 1 beta, 1 beta' and 1 omega subunit. When a sigma factor is associated with the core the holoenzyme is formed, which can initiate transcription.

It carries out the reaction RNA(n) + a ribonucleoside 5'-triphosphate = RNA(n+1) + diphosphate. DNA-dependent RNA polymerase catalyzes the transcription of DNA into RNA using the four ribonucleoside triphosphates as substrates. The polypeptide is DNA-directed RNA polymerase subunit alpha (Mycolicibacterium smegmatis (strain ATCC 700084 / mc(2)155) (Mycobacterium smegmatis)).